Consider the following 562-residue polypeptide: Arginine--tRNA ligase (562 aa).

The 'HIGH' region signature appears at 121–131 (PNIAKPISMGH).

Belongs to the class-I aminoacyl-tRNA synthetase family. Monomer.

The protein localises to the cytoplasm. The catalysed reaction is tRNA(Arg) + L-arginine + ATP = L-arginyl-tRNA(Arg) + AMP + diphosphate. This is Arginine--tRNA ligase from Lactiplantibacillus plantarum (strain ATCC BAA-793 / NCIMB 8826 / WCFS1) (Lactobacillus plantarum).